The following is a 199-amino-acid chain: Proteasome subunit beta type-2 (199 aa).

The protein belongs to the peptidase T1B family. As to quaternary structure, the 26S proteasome consists of a 20S proteasome core and two 19S regulatory subunits. The 20S proteasome core is composed of 28 subunits that are arranged in four stacked rings, resulting in a barrel-shaped structure. The two end rings are each formed by seven alpha subunits, and the two central rings are each formed by seven beta subunits. The catalytic chamber with the active sites is on the inside of the barrel.

It is found in the cytoplasm. The protein localises to the nucleus. In terms of biological role, non-catalytic component of the proteasome, a multicatalytic proteinase complex which is characterized by its ability to cleave peptides with Arg, Phe, Tyr, Leu, and Glu adjacent to the leaving group at neutral or slightly basic pH. The proteasome has an ATP-dependent proteolytic activity. In Caenorhabditis elegans, this protein is Proteasome subunit beta type-2 (pbs-4).